A 376-amino-acid polypeptide reads, in one-letter code: Ribosomal RNA large subunit methyltransferase G (376 aa).

The protein belongs to the methyltransferase superfamily. RlmG family.

The protein resides in the cytoplasm. It carries out the reaction guanosine(1835) in 23S rRNA + S-adenosyl-L-methionine = N(2)-methylguanosine(1835) in 23S rRNA + S-adenosyl-L-homocysteine + H(+). Its function is as follows. Specifically methylates the guanine in position 1835 (m2G1835) of 23S rRNA. The chain is Ribosomal RNA large subunit methyltransferase G from Vibrio vulnificus (strain CMCP6).